The chain runs to 495 residues: Glucose-6-phosphate 1-dehydrogenase (495 aa).

Position 1 is an N-acetylserine (S1). Residues G15–R22, R49, and K149 each bind NADP(+). D-glucose 6-phosphate is bound by residues K149, H179–K183, E217, and D236. Catalysis depends on H241, which acts as the Proton acceptor. R332 serves as a coordination point for NADP(+). D-glucose 6-phosphate is bound at residue K335. 3 residues coordinate NADP(+): K341, R345, and R367. A D-glucose 6-phosphate-binding site is contributed by Q369. NADP(+) is bound by residues Y375–K377, D395–T397, and K463.

Belongs to the glucose-6-phosphate dehydrogenase family.

It catalyses the reaction D-glucose 6-phosphate + NADP(+) = 6-phospho-D-glucono-1,5-lactone + NADPH + H(+). Its pathway is carbohydrate degradation; pentose phosphate pathway; D-ribulose 5-phosphate from D-glucose 6-phosphate (oxidative stage): step 1/3. Functionally, catalyzes the rate-limiting step of the oxidative pentose-phosphate pathway, which represents a route for the dissimilation of carbohydrates besides glycolysis. The main function of this enzyme is to provide reducing power (NADPH) and pentose phosphates for fatty acid and nucleic acid synthesis. In Cyberlindnera jadinii (Torula yeast), this protein is Glucose-6-phosphate 1-dehydrogenase.